The following is a 122-amino-acid chain: Large ribosomal subunit protein bL20c (122 aa).

This sequence belongs to the bacterial ribosomal protein bL20 family.

Its subcellular location is the plastid. It is found in the chloroplast. In terms of biological role, binds directly to 23S ribosomal RNA and is necessary for the in vitro assembly process of the 50S ribosomal subunit. It is not involved in the protein synthesizing functions of that subunit. The protein is Large ribosomal subunit protein bL20c of Dioscorea elephantipes (Elephant's foot yam).